We begin with the raw amino-acid sequence, 544 residues long: Probable protein kinase UbiB (544 aa).

A helical membrane pass occupies residues 1–21 (MIFGELRRLYLIIGVMLSYGL). One can recognise a Protein kinase domain in the interval 123–500 (DFQQEPLASA…HVRQSQSRFL (378 aa)). ATP is bound by residues 129-137 (LASASIAQV) and K151. D286 serves as the catalytic Proton acceptor. 2 helical membrane-spanning segments follow: residues 499 to 519 (FLFGIGATLLLIGTFLMTQGA) and 520 to 540 (DEGSLPAWLMAAGTVSWIIGW).

This sequence belongs to the ABC1 family. UbiB subfamily.

It is found in the cell inner membrane. It functions in the pathway cofactor biosynthesis; ubiquinone biosynthesis [regulation]. Is probably a protein kinase regulator of UbiI activity which is involved in aerobic coenzyme Q (ubiquinone) biosynthesis. The sequence is that of Probable protein kinase UbiB from Sodalis glossinidius (strain morsitans).